The sequence spans 233 residues: Large ribosomal subunit protein uL1 (233 aa).

The protein belongs to the universal ribosomal protein uL1 family. Part of the 50S ribosomal subunit.

Binds directly to 23S rRNA. The L1 stalk is quite mobile in the ribosome, and is involved in E site tRNA release. In terms of biological role, protein L1 is also a translational repressor protein, it controls the translation of the L11 operon by binding to its mRNA. This chain is Large ribosomal subunit protein uL1, found in Thermotoga maritima (strain ATCC 43589 / DSM 3109 / JCM 10099 / NBRC 100826 / MSB8).